We begin with the raw amino-acid sequence, 143 residues long: Nucleoside diphosphate kinase (143 aa).

K11, F59, R87, T93, R104, and N114 together coordinate ATP. H117 (pros-phosphohistidine intermediate) is an active-site residue.

This sequence belongs to the NDK family. In terms of assembly, homotetramer. Mg(2+) serves as cofactor.

It is found in the cytoplasm. It catalyses the reaction a 2'-deoxyribonucleoside 5'-diphosphate + ATP = a 2'-deoxyribonucleoside 5'-triphosphate + ADP. The catalysed reaction is a ribonucleoside 5'-diphosphate + ATP = a ribonucleoside 5'-triphosphate + ADP. Functionally, major role in the synthesis of nucleoside triphosphates other than ATP. The ATP gamma phosphate is transferred to the NDP beta phosphate via a ping-pong mechanism, using a phosphorylated active-site intermediate. This is Nucleoside diphosphate kinase from Sodalis glossinidius (strain morsitans).